We begin with the raw amino-acid sequence, 201 residues long: MQPFTSHTGLAVMIDSANIDTDQIIPKQFLSKVTRDGFGVHLFHDWRYLDDAGDVPNPDFTLNKPRYSGASILLAQENFGCGSSREHAPWALADFGLRAIIAPSFADIFYGNSINNGLLPVKLSANEVRQLMDEVASEEGAQITVDLTTCKVISPSGAEFSFTLAESARHKLLNGLDAIGLTLSHGTQIGEYEANIPSWRR.

Belongs to the LeuD family. LeuD type 1 subfamily. In terms of assembly, heterodimer of LeuC and LeuD.

It carries out the reaction (2R,3S)-3-isopropylmalate = (2S)-2-isopropylmalate. It functions in the pathway amino-acid biosynthesis; L-leucine biosynthesis; L-leucine from 3-methyl-2-oxobutanoate: step 2/4. Its function is as follows. Catalyzes the isomerization between 2-isopropylmalate and 3-isopropylmalate, via the formation of 2-isopropylmaleate. This chain is 3-isopropylmalate dehydratase small subunit, found in Shewanella sp. (strain MR-4).